A 339-amino-acid polypeptide reads, in one-letter code: Photosystem II assembly lipoprotein Ycf48 (339 aa).

The first 23 residues, 1-23 (MNRLIKFSFNLILIFVLGLGLSG), serve as a signal peptide directing secretion. The N-palmitoyl cysteine moiety is linked to residue Cys-24. Cys-24 is lipidated: S-diacylglycerol cysteine.

It belongs to the Ycf48 family. As to quaternary structure, part of early PSII assembly complexes which includes D1 (psbA) and PsbI; not found in mature PSII. Binds to the lumenal side of PSII complexes. Interacts with YidC.

The protein resides in the cellular thylakoid membrane. In terms of biological role, a factor required for optimal assembly of photosystem II (PSII), acting in the early stages of PSII assembly. Also plays a role in replacement of photodamaged D1 (psbA). Assists YidC in synthesis of chlorophyll-binding proteins. The chain is Photosystem II assembly lipoprotein Ycf48 from Prochlorococcus marinus (strain SARG / CCMP1375 / SS120).